A 259-amino-acid chain; its full sequence is E3 ubiquitin-protein ligase RNF170 (259 aa).

Residues 1–25 (MAKYQGEVQSLKLDDDSVIEGVSDQ) lie on the Lumenal side of the membrane. Residues 26–46 (VLVAVVVSLALIATLVYALFS) traverse the membrane as a helical segment. The Cytoplasmic portion of the chain corresponds to 47-202 (RNAHQNIHPE…GGLFWMFRIR (156 aa)). The RING-type zinc finger occupies 88–131 (CPICLHQASLPVETNCGHLFCGTCIVAYWRYGSWLGAISCPICR). Residues 203–223 (IILCLMGAFFYLISPLDFVPE) form a helical membrane-spanning segment. Residue Ala224 is a topological domain, lumenal. A helical membrane pass occupies residues 225–245 (LFGILGFLDDFFVIFLLLIYI). The Cytoplasmic portion of the chain corresponds to 246-259 (SIMYREVITQRLNR).

As to quaternary structure, constitutively associated with the ERLIN1/ERLIN 2 complex. Interacts with activated ITPR1.

It is found in the endoplasmic reticulum membrane. It catalyses the reaction S-ubiquitinyl-[E2 ubiquitin-conjugating enzyme]-L-cysteine + [acceptor protein]-L-lysine = [E2 ubiquitin-conjugating enzyme]-L-cysteine + N(6)-ubiquitinyl-[acceptor protein]-L-lysine.. It participates in protein modification; protein ubiquitination. Its function is as follows. E3 ubiquitin-protein ligase. Plays an essential role in stimulus-induced inositol 1,4,5-trisphosphate receptor type 1 (ITPR1) ubiquitination and degradation via the endoplasmic reticulum-associated degradation (ERAD) pathway. Also involved in ITPR1 turnover in resting cells. Selectively inhibits the TLR3-triggered innate immune response by promoting the 'Lys-48'-linked polyubiquitination and degradation of TLR3. This Bos taurus (Bovine) protein is E3 ubiquitin-protein ligase RNF170 (RNF170).